A 777-amino-acid polypeptide reads, in one-letter code: 1,4-alpha-glucan branching enzyme GlgB (777 aa).

D408 functions as the Nucleophile in the catalytic mechanism. E461 serves as the catalytic Proton donor.

The protein belongs to the glycosyl hydrolase 13 family. GlgB subfamily. As to quaternary structure, monomer.

The catalysed reaction is Transfers a segment of a (1-&gt;4)-alpha-D-glucan chain to a primary hydroxy group in a similar glucan chain.. It participates in glycan biosynthesis; glycogen biosynthesis. Catalyzes the formation of the alpha-1,6-glucosidic linkages in glycogen by scission of a 1,4-alpha-linked oligosaccharide from growing alpha-1,4-glucan chains and the subsequent attachment of the oligosaccharide to the alpha-1,6 position. The polypeptide is 1,4-alpha-glucan branching enzyme GlgB (Actinobacillus pleuropneumoniae serotype 7 (strain AP76)).